The sequence spans 148 residues: Large ribosomal subunit protein uL15 (148 aa).

Residues 1-57 (MRLNDVKPQKGSKKRRRRVGRGISAGQGASAGLGMRGQKSRSGSGTRPGFEGGQQPL) form a disordered region. Positions 10–20 (KGSKKRRRRVG) are enriched in basic residues. Gly residues predominate over residues 23 to 35 (ISAGQGASAGLGM).

It belongs to the universal ribosomal protein uL15 family. As to quaternary structure, part of the 50S ribosomal subunit.

In terms of biological role, binds to the 23S rRNA. The sequence is that of Large ribosomal subunit protein uL15 from Trichormus variabilis (strain ATCC 29413 / PCC 7937) (Anabaena variabilis).